Reading from the N-terminus, the 120-residue chain is Membrane-anchored ubiquitin-fold protein 5 (120 aa).

Residues I7–E72 enclose the Ubiquitin-like domain. The S-palmitoyl cysteine moiety is linked to residue C115. C117 is subject to Cysteine methyl ester. A lipid anchor (S-geranylgeranyl cysteine) is attached at C117. Residues C118–L120 constitute a propeptide, removed in mature form.

As to expression, ubiquitous.

It is found in the cell membrane. Its function is as follows. May serve as docking site to facilitate the association of other proteins to the plasma membrane. The sequence is that of Membrane-anchored ubiquitin-fold protein 5 (MUB5) from Arabidopsis thaliana (Mouse-ear cress).